The sequence spans 104 residues: Class I hydrophobin 4 (104 aa).

The first 16 residues, M1–A16, serve as a signal peptide directing secretion. Cystine bridges form between C26/C85, C34/C79, C35/C61, and C86/C99.

This sequence belongs to the fungal hydrophobin family. Self-assembles to form functional amyloid fibrils called rodlets. Self-assembly into fibrillar rodlets occurs spontaneously at hydrophobic:hydrophilic interfaces and the rodlets further associate laterally to form amphipathic monolayers.

The protein resides in the secreted. Its subcellular location is the cell wall. Its function is as follows. Aerial growth, conidiation, and dispersal of filamentous fungi in the environment rely upon a capability of their secreting small amphipathic proteins called hydrophobins (HPBs) with low sequence identity. Class I can self-assemble into an outermost layer of rodlet bundles on aerial cell surfaces, conferring cellular hydrophobicity that supports fungal growth, development and dispersal; whereas Class II form highly ordered films at water-air interfaces through intermolecular interactions but contribute nothing to the rodlet structure. HYD4 is a class I hydrophobin that negatively regulates aerial mycelial growth, conidiation, carotenoid and adenosine synthesis, resistance to oxidant stress, and fruiting body development. Seems not to be involved in the mycelial growth rate, the hydrophobicity of the mycelia and conidia, nor the conidial virulence on silkworm pupae. This chain is Class I hydrophobin 4, found in Cordyceps militaris (Caterpillar fungus).